Reading from the N-terminus, the 313-residue chain is Tyrosine recombinase XerD (313 aa).

A Core-binding (CB) domain is found at 17 to 102 (EDNDVIIEQF…TLRRFFQYLY (86 aa)). Residues 123–307 (RLPKDLSEQQ…ATERLKVLHQ (185 aa)) enclose the Tyr recombinase domain. Residues Arg163, Lys187, His259, Arg262, and His285 contribute to the active site. The active-site O-(3'-phospho-DNA)-tyrosine intermediate is the Tyr294.

This sequence belongs to the 'phage' integrase family. XerD subfamily. As to quaternary structure, forms a cyclic heterotetrameric complex composed of two molecules of XerC and two molecules of XerD, in which XerC interacts with XerD via its C-terminal region, XerD interacts with XerC via its C-terminal region and so on.

The protein localises to the cytoplasm. FtsK may regulate the catalytic switch between XerC and XerD in the heterotetrameric complex during the two steps of the recombination process. Functionally, site-specific tyrosine recombinase, which acts by catalyzing the cutting and rejoining of the recombining DNA molecules. Binds cooperatively to specific DNA consensus sequences that are separated from XerC binding sites by a short central region, forming the heterotetrameric XerC-XerD complex that recombines DNA substrates. The complex is essential to convert dimers of the bacterial chromosome into monomers to permit their segregation at cell division. It also contributes to the segregational stability of plasmids. In the complex XerD specifically exchanges the bottom DNA strands. This chain is Tyrosine recombinase XerD, found in Proteus mirabilis.